The primary structure comprises 490 residues: Cytochrome P450 2C25 (490 aa).

Residue Cys-435 participates in heme binding.

The protein belongs to the cytochrome P450 family. The cofactor is heme.

The protein localises to the endoplasmic reticulum membrane. Its subcellular location is the microsome membrane. The catalysed reaction is an organic molecule + reduced [NADPH--hemoprotein reductase] + O2 = an alcohol + oxidized [NADPH--hemoprotein reductase] + H2O + H(+). Catalyzes the hydroxylation of tolbutamide and the N-demethylation of aminopyrine and benzphetamine. Also has testosterone hydroxylase (16 beta) activity. The protein is Cytochrome P450 2C25 (CYP2C25) of Mesocricetus auratus (Golden hamster).